Reading from the N-terminus, the 315-residue chain is tRNA dimethylallyltransferase (315 aa).

10–17 (GPTGVGKT) contacts ATP. 12 to 17 (TGVGKT) serves as a coordination point for substrate. An interaction with substrate tRNA region spans residues 35–38 (DSMQ).

Belongs to the IPP transferase family. In terms of assembly, monomer. Requires Mg(2+) as cofactor.

It catalyses the reaction adenosine(37) in tRNA + dimethylallyl diphosphate = N(6)-dimethylallyladenosine(37) in tRNA + diphosphate. Catalyzes the transfer of a dimethylallyl group onto the adenine at position 37 in tRNAs that read codons beginning with uridine, leading to the formation of N6-(dimethylallyl)adenosine (i(6)A). The polypeptide is tRNA dimethylallyltransferase (Thermodesulfovibrio yellowstonii (strain ATCC 51303 / DSM 11347 / YP87)).